The primary structure comprises 76 residues: Defensin-like protein 163 (76 aa).

Residues 1–27 (MAKLIYSYLFISMFVLSVLLALPNAEG) form the signal peptide. Disulfide bonds link C33-C76, C43-C62, C48-C70, and C52-C72.

It belongs to the DEFL family.

It is found in the secreted. The chain is Defensin-like protein 163 (LCR24) from Arabidopsis thaliana (Mouse-ear cress).